The following is a 120-amino-acid chain: NAD(P)H-quinone oxidoreductase subunit 3 (120 aa).

The next 3 membrane-spanning stretches (helical) occupy residues 1-21 (MFVL…SLVP), 64-84 (MFAL…PWAV), and 89-109 (LGLL…VALV).

The protein belongs to the complex I subunit 3 family. As to quaternary structure, NDH-1 can be composed of about 15 different subunits; different subcomplexes with different compositions have been identified which probably have different functions.

The protein resides in the cellular thylakoid membrane. The catalysed reaction is a plastoquinone + NADH + (n+1) H(+)(in) = a plastoquinol + NAD(+) + n H(+)(out). It catalyses the reaction a plastoquinone + NADPH + (n+1) H(+)(in) = a plastoquinol + NADP(+) + n H(+)(out). Its function is as follows. NDH-1 shuttles electrons from an unknown electron donor, via FMN and iron-sulfur (Fe-S) centers, to quinones in the respiratory and/or the photosynthetic chain. The immediate electron acceptor for the enzyme in this species is believed to be plastoquinone. Couples the redox reaction to proton translocation, and thus conserves the redox energy in a proton gradient. Cyanobacterial NDH-1 also plays a role in inorganic carbon-concentration. This chain is NAD(P)H-quinone oxidoreductase subunit 3, found in Nostoc punctiforme (strain ATCC 29133 / PCC 73102).